Here is an 86-residue protein sequence, read N- to C-terminus: Small ribosomal subunit protein uS17 (86 aa).

This sequence belongs to the universal ribosomal protein uS17 family. Part of the 30S ribosomal subunit.

In terms of biological role, one of the primary rRNA binding proteins, it binds specifically to the 5'-end of 16S ribosomal RNA. This is Small ribosomal subunit protein uS17 from Roseiflexus sp. (strain RS-1).